Reading from the N-terminus, the 210-residue chain is MKGKFIVIEGLEGAGKSSAHQSVVRVLHELAIQDVVFTREPGGTPLAEKLRHLIKHETEEPVTHKAELLMLYAARIQLVDNVIKPALMQGKWVVGDRHDMSSQAYQGGGRQLDPHFMLTLKETVLGDFEPDLTIYLDIDPIVGLARARGRGELDRIEQMDLDFFHRTRARYLELVKDNPKAVMINAEQSIELVQADIERAVKNWWKSNEK.

10–17 (GLEGAGKS) lines the ATP pocket.

It belongs to the thymidylate kinase family.

It catalyses the reaction dTMP + ATP = dTDP + ADP. Phosphorylation of dTMP to form dTDP in both de novo and salvage pathways of dTTP synthesis. The polypeptide is Thymidylate kinase (Haemophilus influenzae (strain PittEE)).